Here is a 444-residue protein sequence, read N- to C-terminus: Sprouty-related, EVH1 domain-containing protein 1 (444 aa).

An N-acetylserine modification is found at S2. The region spanning 6–123 (ATSDNDNSYA…RGIRRAIEDI (118 aa)) is the WH1 domain. The residue at position 225 (K225) is an N6-methyllysine. A KBD domain is found at 234 to 286 (SIRHVSFQDEDEIVRINPRDILIRRYADYRHPDMWKNDLERDDTDSSVPFSKQ). Residue S239 is modified to Phosphoserine. Residues 268-287 (WKNDLERDDTDSSVPFSKQD) are disordered. S309 bears the Phosphoserine mark. A required for interaction with TESK1 region spans residues 333 to 444 (SRCVYCQERF…CCGGKHKAAG (112 aa)). The 109-residue stretch at 334–442 (RCVYCQERFN…CGCCGGKHKA (109 aa)) folds into the SPR domain.

As to quaternary structure, homodimer and heterodimer. Able to interact with SPRED2 to form heterodimers. Interacts (via C-terminus) with TAOK1/MARKK (via C-terminus); the interaction does not affect TAOK1 kinase activity. Interacts (via C-terminus) with TESK1 (via C-terminus); the interaction inhibits TESK1 kinase activity. Interacts with CAV1. Interacts with RAS. Interacts with palmitoyltransferase ZDHHC17/HIP14; the interaction leads to palmitoylation of SPRED1. Palmitoylated by ZDHHC17/HIP14. In terms of processing, ubiquitinated. Post-translationally, phosphorylated on tyrosine. In terms of tissue distribution, expressed in brain. Weakly expressed in lung, heart, liver, kidney, intestine, spleen, testis, thymus, colon and ovary. Also expressed in embryonic tissues such as heart, lung, liver and brain. Highly expressed in IL3-dependent hematopoietic cell lines (Ba/F3 and MC/9) and bone marrow-derived mast cells (BMMC).

The protein localises to the cell membrane. It is found in the membrane. The protein resides in the caveola. Its subcellular location is the nucleus. Tyrosine kinase substrate that inhibits growth-factor-mediated activation of MAP kinase. Negatively regulates hematopoiesis of bone marrow. Inhibits fibroblast growth factor (FGF)-induced retinal lens fiber differentiation, probably by inhibiting FGF-mediated phosphorylation of ERK1/2. Attenuates actin stress fiber formation via inhibition of TESK1-mediated phosphorylation of cofilin. Inhibits TGFB-induced epithelial-to-mesenchymal transition in lens epithelial cells. In Mus musculus (Mouse), this protein is Sprouty-related, EVH1 domain-containing protein 1 (Spred1).